Consider the following 377-residue polypeptide: Chaperone protein DnaJ (377 aa).

Residues D5–G70 form the J domain. A CR-type zinc finger spans residues G132–Y210. Residues C145, C148, C162, C165, C184, C187, C198, and C201 each coordinate Zn(2+). CXXCXGXG motif repeat units lie at residues C145 to G152, C162 to G169, C184 to G191, and C198 to G205.

The protein belongs to the DnaJ family. Homodimer. Requires Zn(2+) as cofactor.

The protein localises to the cytoplasm. Participates actively in the response to hyperosmotic and heat shock by preventing the aggregation of stress-denatured proteins and by disaggregating proteins, also in an autonomous, DnaK-independent fashion. Unfolded proteins bind initially to DnaJ; upon interaction with the DnaJ-bound protein, DnaK hydrolyzes its bound ATP, resulting in the formation of a stable complex. GrpE releases ADP from DnaK; ATP binding to DnaK triggers the release of the substrate protein, thus completing the reaction cycle. Several rounds of ATP-dependent interactions between DnaJ, DnaK and GrpE are required for fully efficient folding. Also involved, together with DnaK and GrpE, in the DNA replication of plasmids through activation of initiation proteins. The chain is Chaperone protein DnaJ from Buchnera aphidicola subsp. Acyrthosiphon pisum (strain Tuc7).